Here is a 953-residue protein sequence, read N- to C-terminus: MKLPGQEDFEGSDAHENVCSEQLDGDLGPGSGLDGPSDIDNGKAQGCKDPLLFIQLNELLGWPQALEWRETGRWLLFEEKLDIGAGRWSAPHVPTLALPSLQKLRGLLAEGIVLLDCPARSLLELVEQVVRVESLSPELRGQLQALLLQRPQHHIQTTGIRPCRRSNAFRKASRDEDTLLKHQNPLRQKLPPGAEAAAVLAGELGFLEQPLAAFVRLQNPVVLEPLTEVVLPSRFFCLLLGPSTLGRSYHETGRAAAVLLSDPQFQWSVRRASNLHDLLAALDAFLQEVTALPPGRWDRTARIPPPKCLPSQHKRFPSKLQEVTSLSRQSAALAENKHHHGPHTPIPELQRTGRLFGGLVQDVRRKACWYPSDFLDALHPQCFSAVLYIYLATVTNAITFGGLLGDATEGAQGVLESFLGTAVAGATFCLMAGQPLTILSSTGPVLVFERLLFSFSRDYSLDYLPFRLWVGIWVATFCLALVATEASLLVRYFTRFTEEGFCALISLIFIYDAVGKMLNLIRAYPIQRPGSPAYSCFCQYPGTGGNASEFDSTMFKDTEDVLNVHPGLVNASFLPPSECIRQGGYPRGPSCHTVPDIAFFSLLLFFTSFLCAIALKHVKNSRLFPSVVRKVFSDFSSVLAILLGCGLDAFLGLATPKLLVPTEFKPTLPGRGWLVSPFGANPWWLSVAAALPALLLSILIFMDQQITAVILNRAEYRLQKGAGFHLDLFCVAVLMLFTSALGLPWYVSATVISLAHMDSLRRESKACVPGEDPNFLGIREQRLTGLVVFILTGVSIFLAPVLKFIPMPVLYGIFLYMGVAALSSMQFMKRVQLLLMPRKHQPDVLLLRHVPLIRVHLFTAIQLACLGLLWVIKSTPAAIVFPLMLLGLVAVRKALEWIFSPQELLWLDELMPEEEKTIPENRPEPEHLFSGNDSENSELMYQPKAPEINISVN.

Residues serine 20–asparagine 41 form a disordered region. The next 4 membrane-spanning stretches (helical) occupy residues alanine 385–glycine 405, glycine 413–glycine 433, valine 470–valine 490, and phenylalanine 501–isoleucine 521. Residues alanine 385–asparagine 953 form a membrane (anion exchange) region. 2 N-linked (GlcNAc...) asparagine glycosylation sites follow: asparagine 546 and asparagine 570. Helical transmembrane passes span valine 594–alanine 614, phenylalanine 635–threonine 655, proline 682–methionine 702, leucine 728–serine 748, glycine 785–isoleucine 805, methionine 807–phenylalanine 827, and leucine 869–valine 889. Over residues lysine 916–histidine 927 the composition is skewed to basic and acidic residues. Residues lysine 916–glutamate 938 form a disordered region. N-linked (GlcNAc...) asparagine glycans are attached at residues asparagine 932 and asparagine 949.

The protein belongs to the anion exchanger (TC 2.A.31) family. As to expression, expressed in kidney and gastrointestinal tract. In kidney, it is highly expressed in the cortex, expressed at intermediate level in the outer medulla and not expressed in the inner medulla. It is expressed in the cecum, while it is absent in other segments of gastrointestinal tract. Highly expressed in the cortical collecting duct (CCD). Expressed in both alpha-intercalated cells and beta-intercalated cells in the CCD (at protein level).

It is found in the basolateral cell membrane. The enzyme catalyses 2 hydrogencarbonate(out) + chloride(in) + Na(+)(out) = 2 hydrogencarbonate(in) + chloride(out) + Na(+)(in). It catalyses the reaction K(+)(in) + 2 hydrogencarbonate(in) + chloride(out) = K(+)(out) + 2 hydrogencarbonate(out) + chloride(in). The catalysed reaction is Li(+)(in) + 2 hydrogencarbonate(in) + chloride(out) = Li(+)(out) + 2 hydrogencarbonate(out) + chloride(in). It carries out the reaction Rb(+)(in) + 2 hydrogencarbonate(in) + chloride(out) = Rb(+)(out) + 2 hydrogencarbonate(out) + chloride(in). The enzyme catalyses Cs(+)(in) + 2 hydrogencarbonate(in) + chloride(out) = Cs(+)(out) + 2 hydrogencarbonate(out) + chloride(in). Its activity is regulated as follows. 4,4'-diisothiocyanatodihydrostilbene-2,2'- disulfonic acid (H2DIDS) potently inhibits chloride/hydrogencarbonate antiporter activity with 50% inhibition at about 5 uM. Completely inhibits chloride/hydrogencarbonate antiporter activity at 200 uM of 4,4'-diisothiocyano-trans-stilbene-2,2'-disulfonic acid (DIDS). Functionally, electroneutral Cl(-)/HCO3(-) antiporter that favors chloride ion entry and efflux of hydrogencarbonate and sodium ion across the basolateral membrane and may participate in salivary secretion. Also mediates Cl(-)/HCO3(-) exchange activity in the presence of K(+) as well as Cs(+), Li(+), and Rb(+). Does not contribute to Cl(-)/HCO3(-) exchanger in the apical membrane of the upper villous epithelium. The chain is Anion exchange protein 4 from Rattus norvegicus (Rat).